A 169-amino-acid polypeptide reads, in one-letter code: MATQTSNPQSVYDFTVKDAKGKDVDLSIYKGKVLIIVNVASQCGLTNSNYTDMTELYKKYKDQGLEILAFPCNQFGGQEPGNIEDIQQMVCTRFKAEYPIFDKVDVNGDNAAPLYRFLKSSKGGFFGDGIKWNFSKFLIDKEGHVVDRYSPTTSPASMEKDIKKLLGVA.

Cysteine 43 is a catalytic residue.

Belongs to the glutathione peroxidase family. As to quaternary structure, monomer. Has a tendency to form higher mass oligomers. Interacts with FUNDC1; this interaction promotes GPX4 recruitment into mitochondria through TOM/TIM complex where it is degraded by mitophagy.

The protein resides in the cytoplasm. It carries out the reaction a hydroperoxy polyunsaturated fatty acid + 2 glutathione = a hydroxy polyunsaturated fatty acid + glutathione disulfide + H2O. Protects cells and enzymes from oxidative damage, by catalyzing the reduction of hydrogen peroxide, lipid peroxides and organic hydroperoxide, by glutathione. The protein is Probable phospholipid hydroperoxide glutathione peroxidase (GPXle-1) of Solanum lycopersicum (Tomato).